Consider the following 268-residue polypeptide: Glucosamine-6-phosphate deaminase (268 aa).

The active-site Proton acceptor; for enolization step is the aspartate 72. The active-site For ring-opening step is the aspartate 141. The Proton acceptor; for ring-opening step role is filled by histidine 143. Glutamate 148 (for ring-opening step) is an active-site residue.

It belongs to the glucosamine/galactosamine-6-phosphate isomerase family. NagB subfamily.

It catalyses the reaction alpha-D-glucosamine 6-phosphate + H2O = beta-D-fructose 6-phosphate + NH4(+). It participates in amino-sugar metabolism; N-acetylneuraminate degradation; D-fructose 6-phosphate from N-acetylneuraminate: step 5/5. Its activity is regulated as follows. Allosterically activated by N-acetylglucosamine 6-phosphate (GlcNAc6P). Functionally, catalyzes the reversible isomerization-deamination of glucosamine 6-phosphate (GlcN6P) to form fructose 6-phosphate (Fru6P) and ammonium ion. The polypeptide is Glucosamine-6-phosphate deaminase (Borrelia garinii subsp. bavariensis (strain ATCC BAA-2496 / DSM 23469 / PBi) (Borreliella bavariensis)).